Reading from the N-terminus, the 323-residue chain is NADH-ubiquinone oxidoreductase chain 1 (323 aa).

Transmembrane regions (helical) follow at residues 10 to 30 (LLYI…GLLI), 52 to 72 (PNVV…KLVL), 84 to 104 (IIYA…WSVI), 119 to 139 (VIFI…AGWA), 157 to 177 (VSYE…AGTV), 189 to 209 (VWFI…ALAE), 245 to 265 (YANI…GIVS), 268 to 288 (ISGA…RATL), and 302 to 322 (KSLL…VLII).

This sequence belongs to the complex I subunit 1 family.

The protein resides in the mitochondrion inner membrane. The enzyme catalyses a ubiquinone + NADH + 5 H(+)(in) = a ubiquinol + NAD(+) + 4 H(+)(out). Core subunit of the mitochondrial membrane respiratory chain NADH dehydrogenase (Complex I) that is believed to belong to the minimal assembly required for catalysis. Complex I functions in the transfer of electrons from NADH to the respiratory chain. The immediate electron acceptor for the enzyme is believed to be ubiquinone. The sequence is that of NADH-ubiquinone oxidoreductase chain 1 (nad1) from Dictyostelium citrinum (Slime mold).